A 788-amino-acid polypeptide reads, in one-letter code: Choline transporter-like protein 1 (788 aa).

The chain crosses the membrane as a helical span at residues 98–118; the sequence is FLFFVFLCGWVVVASLGIMWG. The N-linked (GlcNAc...) asparagine glycan is linked to Asn-276. A run of 4 helical transmembrane segments spans residues 329 to 349, 352 to 372, 409 to 429, and 458 to 478; these read WWQT…WTVI, LLGS…LGFG, FVVA…ILFI, and LFPF…AIWL. Asn-497 carries an N-linked (GlcNAc...) asparagine glycan. Transmembrane regions (helical) follow at residues 531–551, 583–603, 620–640, 679–699, and 718–738; these read LFAF…ALAG, LGSI…RVML, WFLM…KFLT, AGIL…ILSF, and YYFV…DLFF.

This sequence belongs to the CTL (choline transporter-like) family.

The protein localises to the membrane. The chain is Choline transporter-like protein 1 (chtl-1) from Caenorhabditis briggsae.